We begin with the raw amino-acid sequence, 919 residues long: Glutamate receptor ionotropic, kainate 3 (919 aa).

Residues 1–31 (MTAPWRRLRSLVWEYWAGLLVCAFWIPDSRG) form the signal peptide. Over 32-563 (MPHVIRIGGI…VFSFLNPLSP (532 aa)) the chain is Extracellular. 7 N-linked (GlcNAc...) asparagine glycosylation sites follow: asparagine 70, asparagine 76, asparagine 278, asparagine 381, asparagine 415, asparagine 426, and asparagine 433. A disulfide bridge links cysteine 99 with cysteine 350. The L-glutamate site is built by proline 518, threonine 520, and arginine 525. Asparagine 548 and asparagine 551 each carry an N-linked (GlcNAc...) asparagine glycan. The chain crosses the membrane as a helical span at residues 564–584 (DIWMYVLLAYLGVSCVLFVIA). Residues 585–636 (RFSPYEWYDAHPCNPGSEVVENNFTLLNSFWFGMGSLMQQGSELMPKALSTR) are Cytoplasmic-facing. A helical transmembrane segment spans residues 637–657 (IIGGIWWFFTLIIISSYTANL). The Extracellular portion of the chain corresponds to 658-820 (AAFLTVERME…KEASALGIQK (163 aa)). The L-glutamate site is built by alanine 691, threonine 692, and glutamate 739. A glycan (N-linked (GlcNAc...) asparagine) is linked at asparagine 752. A helical transmembrane segment spans residues 821–841 (IGGIFIVLAAGLVLSVLVAVG). The Cytoplasmic portion of the chain corresponds to 842–919 (EFVYKLRKTA…CSTSLAPVFP (78 aa)). Serine 869 carries the phosphoserine modification. Lysine 887 is covalently cross-linked (Glycyl lysine isopeptide (Lys-Gly) (interchain with G-Cter in SUMO1)).

Belongs to the glutamate-gated ion channel (TC 1.A.10.1) family. GRIK3 subfamily. As to quaternary structure, homotetramer, and heterotetramer with either GRIK4 or GRIK5. Can form functional heteromeric receptors with GRIK2. Interacts with PRKCABP. Interacts with NETO2.

It localises to the cell membrane. It is found in the postsynaptic cell membrane. The enzyme catalyses Ca(2+)(in) = Ca(2+)(out). Ionotropic glutamate receptor that functions as a cation-permeable ligand-gated ion channel, gated by L-glutamate and the glutamatergic agonist kainic acid. Binding of the excitatory neurotransmitter L-glutamate induces a conformation change, leading to the opening of the cation channel, and thereby converts the chemical signal to an electrical impulse. The receptor then desensitizes rapidly and enters a transient inactive state, characterized by the presence of bound agonist. In association with GRIK2, involved in presynaptic facilitation of glutamate release at hippocampal mossy fiber synapses. The polypeptide is Glutamate receptor ionotropic, kainate 3 (GRIK3) (Homo sapiens (Human)).